A 250-amino-acid polypeptide reads, in one-letter code: MAKPRNAAESKAAKAQANAARKAAARQRRAQLWQAFTLQRKEDKRLLPYMIGAFLLIVGASVGVGVWAGGFTMFTMIPLGVLLGALVAFVIFGRRAQRTVYRKAEGQTGAAAWALDNLRGKWRVTPGVAATGNLDAVHRVIGRPGVIFVGEGSAARVKPLLAQEKKRTARLVGDVPIYDIIVGNGDGEVPLAKLERHLTRLPANITVKQMDTVESRLAALGSRAGAGVMPKGPLPTTAKMRSVQRTVRRK.

The first 19 residues, M1 to A19, serve as a signal peptide directing secretion. 2 helical membrane-spanning segments follow: residues I51 to F71 and M73 to G93. The interval A226 to K250 is disordered.

It localises to the cell membrane. This is an uncharacterized protein from Mycobacterium tuberculosis (strain CDC 1551 / Oshkosh).